The sequence spans 520 residues: GMP synthase [glutamine-hydrolyzing] (520 aa).

The region spanning 9-202 (SVLIVDFGSQ…IHNIAGIKGD (194 aa)) is the Glutamine amidotransferase type-1 domain. Residue cysteine 86 is the Nucleophile of the active site. Residues histidine 176 and glutamate 178 contribute to the active site. Residues 203 to 395 (WSMSAYRQKA…LGLPDSFIGR (193 aa)) enclose the GMPS ATP-PPase domain. Residue 230 to 236 (SGGVDSS) coordinates ATP.

As to quaternary structure, homodimer.

It catalyses the reaction XMP + L-glutamine + ATP + H2O = GMP + L-glutamate + AMP + diphosphate + 2 H(+). Its pathway is purine metabolism; GMP biosynthesis; GMP from XMP (L-Gln route): step 1/1. In terms of biological role, catalyzes the synthesis of GMP from XMP. The sequence is that of GMP synthase [glutamine-hydrolyzing] from Rhizobium johnstonii (strain DSM 114642 / LMG 32736 / 3841) (Rhizobium leguminosarum bv. viciae).